The sequence spans 243 residues: MSRLSLSQLVLLSIEEQRLALDEINQQLEQKTAIERVIWALEHLPNQFVLSSSFGIQAAVCLHLLTRQYPDIPVILTDTGYLFPETYQFIDELTSSLQLNLKVYRAEISSSWQEARYGKLWLQGIEGIERYNQINKVAPMEKALKELQAKTWFAGLRRQQSKSREHLPVLSIAKGIFKLLPIVDWDNKQIYQYLKQHNLPYHPLWEQGYLSVGDTHTTRKWQEGMSEEETRFFGLKRECGLHE.

Cys239 serves as the catalytic Nucleophile; cysteine thiosulfonate intermediate.

This sequence belongs to the PAPS reductase family. CysH subfamily.

It is found in the cytoplasm. The enzyme catalyses [thioredoxin]-disulfide + sulfite + adenosine 3',5'-bisphosphate + 2 H(+) = [thioredoxin]-dithiol + 3'-phosphoadenylyl sulfate. It participates in sulfur metabolism; hydrogen sulfide biosynthesis; sulfite from sulfate: step 3/3. Its function is as follows. Catalyzes the formation of sulfite from phosphoadenosine 5'-phosphosulfate (PAPS) using thioredoxin as an electron donor. The chain is Phosphoadenosine 5'-phosphosulfate reductase from Proteus mirabilis (strain HI4320).